The sequence spans 253 residues: MSLVCSVIFIHHAFNANILDKDYAFSDGEILMVDNAVRTHFEPYERHFKEIGFNENTIKKYLQCTNIQTVTMPVPAKFLRASNVPTGLLNEMIAYLNSEERNHHNFSELLLFSCLSIFATCKGFITLLTNGVLSVSGKVRNIVNMKLAHPWKLKDICDCLYISESLLKKKLKQEQTTFSQILLDARMQHAKNLIRVEGSVNKIAEQCGYASTSYFIYAFRKHFGNSPKRVSKEYRCQRHTGMNTGNTMNALAI.

The HTH araC/xylS-type domain maps to 137 to 233; that stretch reads GKVRNIVNMK…GNSPKRVSKE (97 aa). DNA-binding regions (H-T-H motif) lie at residues 154-175 and 200-223; these read KDIC…KQEQ and VNKI…RKHF.

Its function is as follows. Induces the expression of gadE and mdtEF. Could also regulate the expression of other genes involved in acid resistance. The sequence is that of HTH-type transcriptional regulator YdeO from Escherichia coli O157:H7.